Consider the following 401-residue polypeptide: All trans-polyprenyl-diphosphate synthase PDSS2 (401 aa).

This sequence belongs to the FPP/GGPP synthase family. As to quaternary structure, heterotetramer composed of 2 PDSS1/DPS1 and 2 PDSS2/DLP1 subunits.

The protein resides in the mitochondrion. It catalyses the reaction 7 isopentenyl diphosphate + (2E,6E)-farnesyl diphosphate = all-trans-decaprenyl diphosphate + 7 diphosphate. The catalysed reaction is 6 isopentenyl diphosphate + (2E,6E)-farnesyl diphosphate = all-trans-nonaprenyl diphosphate + 6 diphosphate. Its pathway is cofactor biosynthesis; ubiquinone biosynthesis. Functionally, heterotetrameric enzyme that catalyzes the condensation of farnesyl diphosphate (FPP), which acts as a primer, and isopentenyl diphosphate (IPP) to produce prenyl diphosphates of varying chain lengths and participates in the determination of the side chain of ubiquinone. Supplies nona and decaprenyl diphosphate, the precursors for the side chain of the isoprenoid quinones ubiquinone-9 (Q9) and ubiquinone-10 (Q10) respectively. The enzyme adds isopentenyl diphosphate molecules sequentially to farnesyl diphosphate with trans stereochemistry. May play a role during cerebellar development. May regulate mitochondrial respiratory chain function. The chain is All trans-polyprenyl-diphosphate synthase PDSS2 from Mus musculus (Mouse).